A 358-amino-acid chain; its full sequence is Ethanol acetyltransferase 1 (358 aa).

The AB hydrolase-1 domain occupies 59–166; sequence PIVFIHGLFG…NAPINQPHIS (108 aa). Active-site charge relay system residues include S132, D156, and H305.

The protein belongs to the AB hydrolase superfamily.

It localises to the mitochondrion. It carries out the reaction ethanol + acetyl-CoA = ethyl acetate + CoA. The catalysed reaction is acetyl-CoA + H2O = acetate + CoA + H(+). It catalyses the reaction ethyl acetate + H2O = ethanol + acetate + H(+). In terms of biological role, alcohol acetyltransferase that catalyzes the synthesis of ethyl acetate from ethanol and acetyl-CoA. Can also function as a thioesterase by hydrolyzing acetyl-CoA in the absence of ethanol, as well as esterase hydrolyzing ethyl acetate. This Eremothecium cymbalariae (strain CBS 270.75 / DBVPG 7215 / KCTC 17166 / NRRL Y-17582) (Yeast) protein is Ethanol acetyltransferase 1 (EAT1).